Reading from the N-terminus, the 404-residue chain is Cysteine desulfurase IscS (404 aa).

Pyridoxal 5'-phosphate-binding positions include Ala75–Thr76, Asn155, Gln183, and Thr203–His205. Lys206 carries the N6-(pyridoxal phosphate)lysine modification. Thr243 provides a ligand contact to pyridoxal 5'-phosphate. Cys328 serves as the catalytic Cysteine persulfide intermediate. Cys328 lines the [2Fe-2S] cluster pocket.

Belongs to the class-V pyridoxal-phosphate-dependent aminotransferase family. NifS/IscS subfamily. In terms of assembly, homodimer. Forms a heterotetramer with IscU, interacts with other sulfur acceptors. The cofactor is pyridoxal 5'-phosphate.

It is found in the cytoplasm. The catalysed reaction is (sulfur carrier)-H + L-cysteine = (sulfur carrier)-SH + L-alanine. It participates in cofactor biosynthesis; iron-sulfur cluster biosynthesis. Master enzyme that delivers sulfur to a number of partners involved in Fe-S cluster assembly, tRNA modification or cofactor biosynthesis. Catalyzes the removal of elemental sulfur atoms from cysteine to produce alanine. Functions as a sulfur delivery protein for Fe-S cluster synthesis onto IscU, an Fe-S scaffold assembly protein, as well as other S acceptor proteins. This chain is Cysteine desulfurase IscS, found in Cronobacter sakazakii (strain ATCC BAA-894) (Enterobacter sakazakii).